A 185-amino-acid chain; its full sequence is Elongation factor P (185 aa).

This sequence belongs to the elongation factor P family.

Its subcellular location is the cytoplasm. Its pathway is protein biosynthesis; polypeptide chain elongation. Its function is as follows. Involved in peptide bond synthesis. Stimulates efficient translation and peptide-bond synthesis on native or reconstituted 70S ribosomes in vitro. Probably functions indirectly by altering the affinity of the ribosome for aminoacyl-tRNA, thus increasing their reactivity as acceptors for peptidyl transferase. In Nostoc punctiforme (strain ATCC 29133 / PCC 73102), this protein is Elongation factor P.